A 121-amino-acid polypeptide reads, in one-letter code: MSDFQKEKVEEQEQQQQQIIKIRITLTSTKVKQLENVSSNIVKNAEQHNLVKKGPVRLPTKVLKISTRKTPNGEGSKTWETYEMRIHKRYIDLEAPVQIVKRITQITIEPGVDVEVVVASN.

Serine 2 bears the N-acetylserine mark. Residues lysine 6, lysine 8, lysine 21, lysine 32, and lysine 101 each participate in a glycyl lysine isopeptide (Lys-Gly) (interchain with G-Cter in ubiquitin) cross-link.

It belongs to the universal ribosomal protein uS10 family. As to quaternary structure, component of the small ribosomal subunit (SSU). Mature yeast ribosomes consist of a small (40S) and a large (60S) subunit. The 40S small subunit contains 1 molecule of ribosomal RNA (18S rRNA) and 33 different proteins (encoded by 57 genes). The large 60S subunit contains 3 rRNA molecules (25S, 5.8S and 5S rRNA) and 46 different proteins (encoded by 81 genes). In terms of processing, ubiquitinated at Lys-6 and Lys-8 by HEL2, to activate the ribosome quality control (RQC) pathway in response to stalled ribosomes. Post-translationally, N-terminally acetylated by acetyltransferase NatA. Also partially acetylated by NatC.

The protein resides in the cytoplasm. Functionally, component of the ribosome, a large ribonucleoprotein complex responsible for the synthesis of proteins in the cell. The small ribosomal subunit (SSU) binds messenger RNAs (mRNAs) and translates the encoded message by selecting cognate aminoacyl-transfer RNA (tRNA) molecules. The large subunit (LSU) contains the ribosomal catalytic site termed the peptidyl transferase center (PTC), which catalyzes the formation of peptide bonds, thereby polymerizing the amino acids delivered by tRNAs into a polypeptide chain. The nascent polypeptides leave the ribosome through a tunnel in the LSU and interact with protein factors that function in enzymatic processing, targeting, and the membrane insertion of nascent chains at the exit of the ribosomal tunnel. The chain is Small ribosomal subunit protein uS10 from Saccharomyces cerevisiae (strain ATCC 204508 / S288c) (Baker's yeast).